The chain runs to 841 residues: Follistatin-related protein 4 (841 aa).

The first 22 residues, 1-22, serve as a signal peptide directing secretion; the sequence is MKPGGFWPHLALLGVSLPAVLG. Residues 29-54 are disordered; it reads SRSPNMVPGESQAEETRGFEVTRREG. The span at 42–54 shows a compositional bias: basic and acidic residues; sequence EETRGFEVTRREG. One can recognise a Kazal-like domain in the interval 80–134; it reads TTGQPSCQCLEVCRPRYMPVCGSDGRLYGNHCELRRAACLLGKRIVSVHSKDCFL. Intrachain disulfides connect cysteine 86/cysteine 118, cysteine 92/cysteine 111, and cysteine 100/cysteine 132. 2 EF-hand domains span residues 173–208 and 225–247; these read QKRL…EQDM and DYNS…IQLS. The Ca(2+) site is built by aspartate 186, aspartate 188, asparagine 190, histidine 192, glutamate 197, aspartate 225, asparagine 227, aspartate 229, serine 231, and glutamate 236. Ig-like domains follow at residues 250–336 and 340–425; these read PEDK…VLQV and PVIR…EDIS. 2 disulfides stabilise this stretch: cysteine 269-cysteine 320 and cysteine 361-cysteine 412. N-linked (GlcNAc...) asparagine glycosylation is present at asparagine 317.

It localises to the secreted. This chain is Follistatin-related protein 4 (Fstl4), found in Mus musculus (Mouse).